The primary structure comprises 446 residues: NADH-quinone oxidoreductase subunit D (446 aa).

It belongs to the complex I 49 kDa subunit family. NDH-1 is composed of 14 different subunits. Subunits NuoB, C, D, E, F, and G constitute the peripheral sector of the complex.

The protein localises to the cell membrane. It catalyses the reaction a quinone + NADH + 5 H(+)(in) = a quinol + NAD(+) + 4 H(+)(out). In terms of biological role, NDH-1 shuttles electrons from NADH, via FMN and iron-sulfur (Fe-S) centers, to quinones in the respiratory chain. The immediate electron acceptor for the enzyme in this species is believed to be a menaquinone. Couples the redox reaction to proton translocation (for every two electrons transferred, four hydrogen ions are translocated across the cytoplasmic membrane), and thus conserves the redox energy in a proton gradient. The sequence is that of NADH-quinone oxidoreductase subunit D from Nocardioides sp. (strain ATCC BAA-499 / JS614).